We begin with the raw amino-acid sequence, 385 residues long: Tumor protein p53-inducible protein 13 (385 aa).

A signal peptide spans 1 to 27; that stretch reads MVHPPPPPPRLLLVALVGLLSLREVVA. Residues 28 to 301 are Extracellular-facing; the sequence is EPAEEAGTPC…ARGPTPRTEE (274 aa). Residues 242-297 form a disordered region; that stretch reads APVSLTTGGPGGNGRSRTEAQMPSGQGNHGGCACPGQVSPAPRAAGPPRVARGPTP. Low complexity predominate over residues 281-297; it reads PAPRAAGPPRVARGPTP. Residues 302 to 322 traverse the membrane as a helical segment; that stretch reads AAWAAMALTFLLVLLTLATLC. At 323–385 the chain is on the cytoplasmic side; the sequence is TRLHRNFRRS…DSGPDSESSD (63 aa). The segment covering 359-369 has biased composition (basic residues); the sequence is SRRIKRSRRRP. The tract at residues 359–385 is disordered; sequence SRRIKRSRRRPLLPPTPDSGPDSESSD.

Its subcellular location is the cell membrane. The protein resides in the cytoplasm. May act as a tumor suppressor. Inhibits tumor cell growth, when overexpressed. This Mus musculus (Mouse) protein is Tumor protein p53-inducible protein 13 (Tp53i13).